The sequence spans 138 residues: Probable glycine cleavage system H protein 1 (138 aa).

Positions 30-112 constitute a Lipoyl-binding domain; the sequence is IATVGITDYA…YGRGWIFKLK (83 aa). Position 71 is an N6-lipoyllysine (Lys71).

It belongs to the GcvH family. The glycine cleavage system is composed of four proteins: P, T, L and H. Requires (R)-lipoate as cofactor.

In terms of biological role, the glycine cleavage system catalyzes the degradation of glycine. The H protein shuttles the methylamine group of glycine from the P protein to the T protein. This is Probable glycine cleavage system H protein 1 from Sulfolobus acidocaldarius (strain ATCC 33909 / DSM 639 / JCM 8929 / NBRC 15157 / NCIMB 11770).